A 195-amino-acid chain; its full sequence is MSKQEKSNVEDKSLDIETAAQVETAQESASGALEELSVEEQLERAKDTIKELEDSCDQFKDEALRAKAEMENIRKRAERDVSNARKFGIEKFSKELLPVIDSIEQALKHEVKLEEAIAMKEGIELTAKMLVDILKKNGVEELDPKGEKFDPNLHEAMAMIPNPEFEDNTIFDVFQKGYMLNGRIVRAAKVVIVKN.

This sequence belongs to the GrpE family. Homodimer.

It localises to the cytoplasm. Its function is as follows. Participates actively in the response to hyperosmotic and heat shock by preventing the aggregation of stress-denatured proteins, in association with DnaK and GrpE. It is the nucleotide exchange factor for DnaK and may function as a thermosensor. Unfolded proteins bind initially to DnaJ; upon interaction with the DnaJ-bound protein, DnaK hydrolyzes its bound ATP, resulting in the formation of a stable complex. GrpE releases ADP from DnaK; ATP binding to DnaK triggers the release of the substrate protein, thus completing the reaction cycle. Several rounds of ATP-dependent interactions between DnaJ, DnaK and GrpE are required for fully efficient folding. The protein is Protein GrpE of Francisella tularensis subsp. tularensis (strain FSC 198).